The chain runs to 481 residues: UDP-glycosyltransferase 73B3 (481 aa).

H21 functions as the Proton acceptor in the catalytic mechanism. An an anthocyanidin-binding site is contributed by H21. D132 acts as the Charge relay in catalysis. 7 residues coordinate UDP-alpha-D-glucose: A355, Q357, H372, W375, N376, S377, and E380. Residue A395 participates in an anthocyanidin binding. UDP-alpha-D-glucose is bound by residues E396 and Q397.

The protein belongs to the UDP-glycosyltransferase family. Expressed in roots and flowers.

The enzyme catalyses a flavonol + UDP-alpha-D-glucose = a flavonol 3-O-beta-D-glucoside + UDP + H(+). Functionally, possesses quercetin 3-O-glucosyltransferase activity in vitro. Also active in vitro on benzoates and benzoate derivatives. Involved in stress or defense responses. The protein is UDP-glycosyltransferase 73B3 (UGT73B3) of Arabidopsis thaliana (Mouse-ear cress).